Consider the following 396-residue polypeptide: S-adenosylmethionine synthase (396 aa).

His16 contributes to the ATP binding site. Residue Asp18 participates in Mg(2+) binding. A K(+)-binding site is contributed by Glu44. 2 residues coordinate L-methionine: Glu57 and Gln100. The interval 100 to 110 (QSKDIALGVDK) is flexible loop. ATP-binding positions include 176–178 (DGK), 243–244 (RF), Asp252, 258–259 (RK), Ala275, and Lys279. Position 252 (Asp252) interacts with L-methionine. Lys283 contributes to the L-methionine binding site.

This sequence belongs to the AdoMet synthase family. As to quaternary structure, homotetramer; dimer of dimers. It depends on Mg(2+) as a cofactor. K(+) serves as cofactor.

It is found in the cytoplasm. It carries out the reaction L-methionine + ATP + H2O = S-adenosyl-L-methionine + phosphate + diphosphate. Its pathway is amino-acid biosynthesis; S-adenosyl-L-methionine biosynthesis; S-adenosyl-L-methionine from L-methionine: step 1/1. Its function is as follows. Catalyzes the formation of S-adenosylmethionine (AdoMet) from methionine and ATP. The overall synthetic reaction is composed of two sequential steps, AdoMet formation and the subsequent tripolyphosphate hydrolysis which occurs prior to release of AdoMet from the enzyme. The protein is S-adenosylmethionine synthase of Lachnoclostridium phytofermentans (strain ATCC 700394 / DSM 18823 / ISDg) (Clostridium phytofermentans).